The following is a 706-amino-acid chain: MFNIVKKEIQWGEETLTLETGRVARQADGSVIATLGETSVMANVTFAKSPKPGMDFFPLTVHYQEKYYAAGKVPGGFFKREARPTEKETLTARLIDRPIRPLFVPGFKNETLVMCTVLSHDLVNDPDMVAMIAASAALTISGAPFRGPIAGCRVGFEDGEYILNPEIDDMHDLRNNPEQRLDLVVAGTKDAVMMVESEAYELTEAEMLGAVKFAHDSIQPVIDLIIDLAEDAAKEPFDFQAPDYSELFEAVKAAGEDKMREAYAITDKLERQAAVSAVKEGVKEGLSEEQLEDPNLSAALKKLESTVLRSDVVKNGRRIDGRALDEVRDIVSETKVLPRTHGSALFTRGETQGLVVTTLGTGDDEQFIDALHGNFKSNFLLHYNFPPYSVGEAGRVGPPGRREIGHGKLAWRALQAVLPAATDFPYTVRVVSEITESNGSSSMASVCGGSLSMMDAGVPLKAPVAGVAMGLVLEDDGSYGILTDILGDEDHLGDMDFKVAGTEAGITSLQMDIKVAGITQEIMEKALEQAKAGRLHILAEMAKAVTEAGEFSEHAPRIETMQIPTDKIREVIGSGGKVIREIVEVSGAKVDINDEGIIKIASPNGDSIQKAYDMIHSIVAEPEEGKIYKGKVVKIVDFGAFVNFFGKRDGLVHVSQIKNERLNHPSDVLSEGQEVWVKLLGFDDRGKVRLAMKMVNQETGEEGAAE.

Residues Asp490 and Asp496 each contribute to the Mg(2+) site. The KH domain maps to 556 to 615 (PRIETMQIPTDKIREVIGSGGKVIREIVEVSGAKVDINDEGIIKIASPNGDSIQKAYDMI). The S1 motif domain maps to 625–693 (GKIYKGKVVK…DRGKVRLAMK (69 aa)).

It belongs to the polyribonucleotide nucleotidyltransferase family. Mg(2+) is required as a cofactor.

It is found in the cytoplasm. The enzyme catalyses RNA(n+1) + phosphate = RNA(n) + a ribonucleoside 5'-diphosphate. Functionally, involved in mRNA degradation. Catalyzes the phosphorolysis of single-stranded polyribonucleotides processively in the 3'- to 5'-direction. This is Polyribonucleotide nucleotidyltransferase from Jannaschia sp. (strain CCS1).